The following is a 395-amino-acid chain: MATHTISRSILCRPAKSLSFLFTRSFASSAPLAKSPASSLLSRSRPLVAAFSSVFRGGLVSVKGLSTQATSSSLNDPNPNWSNRPPKETILLDGCDFEHWLVVVEPPQGEPTRDEIIDSYIKTLAQIVGSEDEARMKIYSVSTRCYYAFGALVSEDLSHKLKELSNVRWVLPDSYLDVRNKDYGGEPFIDGKAVPYDPKYHEEWIRNNARANERNRRNDRPRNNDRSRNFERRRENMAGGPPPQRPPMGGPPPPPHIGGSAPPPPHMGGSAPPPPHMGQNYGPPPPNNMGGPRHPPPYGAPPQNNMGGPRPPQNYGGTPPPNYGGAPPANNMGGAPPPNYGGGPPPQYGAVPPPQYGGAPPQNNNYQQQGSGMQQPQYQNNYPPNRDGSGNPYQG.

The transit peptide at 1-56 (MATHTISRSILCRPAKSLSFLFTRSFASSAPLAKSPASSLLSRSRPLVAAFSSVFR) directs the protein to the chloroplast and mitochondrion. A compositionally biased stretch (basic and acidic residues) spans 211-236 (ANERNRRNDRPRNNDRSRNFERRREN). The interval 211–395 (ANERNRRNDR…RDGSGNPYQG (185 aa)) is disordered. Pro residues predominate over residues 240–300 (GPPPQRPPMG…GPRHPPPYGA (61 aa)). Low complexity predominate over residues 313–334 (QNYGGTPPPNYGGAPPANNMGG). Pro residues predominate over residues 335–355 (APPPNYGGGPPPQYGAVPPPQ). Positions 356–385 (YGGAPPQNNNYQQQGSGMQQPQYQNNYPPN) are enriched in low complexity.

Belongs to the MORF family. As to quaternary structure, interacts with protoporphyrinogen oxidase 1 PPOX1. Interacts with PCMP-H52/MEF10. Homodimer and heterodimers with MORF1/RIP8, MORF2/RIP2, MORF3/RIP3, MORF4/RIP4, MORF5/RIP5, MORF6/RIP6 and MORF7/RIP7. Interacts with RBG3/ORRM3. Interacts with PCMP-A2/PMD1. Interacts with ORRM1 and VAT3/OZ1. Interacts with PCMP-H13/MEF35. Interacts with RBG5/ORRM4. Interacts with ORRM6.

It is found in the mitochondrion. Its subcellular location is the plastid. The protein localises to the chloroplast. Involved in organellar RNA editing. Required for the processing of numerous RNA editing sites in mitochondria and plastids. Binds to the plastid RARE1 factor, a pentatricopeptide repeat-containing protein involved in RNA editing. The chain is Multiple organellar RNA editing factor 8, chloroplastic/mitochondrial from Arabidopsis thaliana (Mouse-ear cress).